We begin with the raw amino-acid sequence, 389 residues long: Chalcone synthase 6 (389 aa).

C164 is a catalytic residue.

This sequence belongs to the thiolase-like superfamily. Chalcone/stilbene synthases family.

It carries out the reaction (E)-4-coumaroyl-CoA + 3 malonyl-CoA + 3 H(+) = 2',4,4',6'-tetrahydroxychalcone + 3 CO2 + 4 CoA. It functions in the pathway secondary metabolite biosynthesis; flavonoid biosynthesis. Functionally, the primary product of this enzyme is 4,2',4',6'-tetrahydroxychalcone (also termed naringenin-chalcone or chalcone) which can under specific conditions spontaneously isomerize into naringenin. This chain is Chalcone synthase 6 (CHS6), found in Trifolium subterraneum (Subterranean clover).